A 108-amino-acid polypeptide reads, in one-letter code: MNQSEMCPRFEKAVDILSKRWVALIVFQLLNGSQRFSEIEAALPNLSGRVLSERLKELELEGVVKRDVIPETPVRIEYSLTDKGKALAPILGEISKWATEWIDPSFLD.

The region spanning C7 to F106 is the HTH hxlR-type domain.

This is an uncharacterized protein from Bacillus subtilis (strain 168).